Reading from the N-terminus, the 872-residue chain is F-box protein pof6 (872 aa).

An F-box domain is found at 30–75; sequence FGCLTINIYLKIFTLISTPDLCNCRLVCRKFQQLCDYNSIYVKKLL. The interval 101–122 is disordered; the sequence is MSSNTSKGFHLQSSDKKYADSD. Over residues 113–122 the composition is skewed to basic and acidic residues; the sequence is SSDKKYADSD.

In terms of assembly, interacts with skp1. Forms a complex with pof6 and skp1.

The protein resides in the cytoplasm. Its subcellular location is the nucleus. In terms of biological role, together with skp1, essential for septum processing and cell separation. The sequence is that of F-box protein pof6 (pof6) from Schizosaccharomyces pombe (strain 972 / ATCC 24843) (Fission yeast).